The primary structure comprises 589 residues: Transcription factor MYC4 (589 aa).

The segment at 99 to 150 (NTVLLGWGDGYYKGEEEKSRKKKSNPASAAEQEHRKRVIRELNSLISGGVGG) is JAZ-interaction domain. Disordered regions lie at residues 114–133 (EEKS…QEHR), 291–326 (AAPV…PNPK), 340–359 (IENG…VSNN), and 381–422 (ASVA…EAER). A compositionally biased stretch (low complexity) spans 296 to 308 (NNGGNDSTSNSDS). Residues 309–322 (QPISKLCNGSSVEN) show a composition bias toward polar residues. Over residues 381-398 (ASVAKEAESNRVVVEPEK) the composition is skewed to basic and acidic residues. The span at 399 to 408 (KPRKRGRKPA) shows a compositional bias: basic residues. The span at 409-422 (NGREEPLNHVEAER) shows a compositional bias: basic and acidic residues. The bHLH domain occupies 412 to 461 (EEPLNHVEAERQRREKLNQRFYSLRAVVPNVSKMDKASLLGDAISYISEL).

In terms of assembly, homo- and heterodimer. Interacts with MYB28, MYB29, MYB34, MYB51, MYB76, MYB122, MYC3, AFPH2/NINJA and the JAZ repressors TIFY10A/JAZ1, TIFY10B/JAZ2, TIFY6B/JAZ3, TIFY6A/JAZ4, TIFY11A/JAZ5, TIFY11B/JAZ6, TIFY5B/JAZ7, TIFY5A/JAZ8, TIFY7/JAZ9, TIFY9/JAZ10, TIFY3A/JAZ11 and TIFY3B/JAZ12. In terms of tissue distribution, expressed constitutively at low levels. Preferentially expressed in vascular tissues.

It is found in the nucleus. In terms of biological role, transcription factor involved in jasmonic acid (JA) gene regulation. With MYC2 and MYC3, controls additively subsets of JA-dependent responses. Can form complexes with all known glucosinolate-related MYBs to regulate glucosinolate biosynthesis. Binds to the G-box (5'-CACGTG-3') of promoters. Activates multiple TIFY/JAZ promoters. This chain is Transcription factor MYC4 (MYC4), found in Arabidopsis thaliana (Mouse-ear cress).